The sequence spans 687 residues: Dentin sialophosphoprotein (687 aa).

The signal sequence occupies residues 1-17 (MKTKIIIYICIWATAWA). The tract at residues 54-113 (NNATNDDSPKGSELGRQVHSNGGYERDRNGSESIAVGGKSSPTQPILANAQGNSAKERED) is disordered. N55 carries N-linked (GlcNAc...) asparagine glycosylation. T57 bears the Phosphothreonine; by CK2 mark. The N-linked (GlcNAc...) asparagine glycan is linked to N82. The span at 93 to 107 (SSPTQPILANAQGNS) shows a compositional bias: polar residues. Residue N128 is glycosylated (N-linked (GlcNAc...) asparagine). A compositionally biased stretch (basic and acidic residues) spans 146–160 (EAKESKVHGQPHQDT). Residues 146–687 (EAKESKVHGQ…SDSNHSTSDD (542 aa)) are disordered. Positions 161–194 (KTGLASDTSQNGDATLVQENEPQVAGSKNSTNHE) are enriched in polar residues. An N-linked (GlcNAc...) asparagine glycan is attached at N189. At S226 the chain carries Phosphoserine; by CK2. S253 carries the post-translational modification Phosphoserine; by CK1. The segment covering 262-275 (GDGRESHDGTEGHE) has biased composition (basic and acidic residues). Over residues 276–292 (GQSSGGNNDNRGQGSVS) the composition is skewed to polar residues. S278 carries the phosphoserine; by CK1 modification. Phosphoserine; by CK2 is present on S292. A Phosphoserine; by CK1 modification is found at S298. A glycan (N-linked (GlcNAc...) asparagine) is linked at N312. A Phosphoserine; by CK2 modification is found at S315. A phosphothreonine; by CK2 mark is found at T319 and T329. Phosphoserine; by CK2 occurs at positions 337 and 345. Residues 352–375 (SGQSQNQGLETEGSSTGNKSSITK) show a composition bias toward polar residues. S366 is subject to Phosphoserine; by CK1. A glycan (N-linked (GlcNAc...) asparagine) is linked at N369. The segment covering 386 to 417 (SNGHHGMELDKRNSPKQGESDKPQGAAEKSDT) has biased composition (basic and acidic residues). The span at 418 to 432 (HNNMGHSRIGSSSNS) shows a compositional bias: polar residues. A compositionally biased stretch (low complexity) spans 447-460 (GDDPNSSDESNGSD). Residues 500–521 (DDSSDDTSDTDDSDSNGDDDSE) show a composition bias toward acidic residues. Basic and acidic residues predominate over residues 522–545 (SKDKDESDNSNHDNDSDSESKSDS). A compositionally biased stretch (low complexity) spans 555-598 (SSDSSDSSDSSETSDSSDSSDTSDSSDSSDSSDSSNSSDTSDSS). Residues 599–617 (DSSDGDSSDGDSSDSDSSD) show a composition bias toward acidic residues. Over residues 618–639 (SDSSNSSDSDSSDSSDSSSSDS) the composition is skewed to low complexity. Residues 667–677 (SDSDSDSDSEG) show a composition bias toward acidic residues. A compositionally biased stretch (low complexity) spans 678 to 687 (SDSNHSTSDD).

As to quaternary structure, interacts with FBLN7. DSP is glycosylated. As to expression, specifically expressed in teeth, mainly in odontoblasts and transiently in pre-ameloblasts.

The protein localises to the secreted. Its subcellular location is the extracellular space. It localises to the extracellular matrix. Functionally, DSP may be an important factor in dentinogenesis. DPP may bind high amount of calcium and facilitate initial mineralization of dentin matrix collagen as well as regulate the size and shape of the crystals. This chain is Dentin sialophosphoprotein (Dspp), found in Rattus norvegicus (Rat).